Consider the following 495-residue polypeptide: Probable cytosol aminopeptidase (495 aa).

K266 and D271 together coordinate Mn(2+). K278 is a catalytic residue. Mn(2+) contacts are provided by D289, D348, and E350. R352 is a catalytic residue.

The protein belongs to the peptidase M17 family. Mn(2+) is required as a cofactor.

It localises to the cytoplasm. The enzyme catalyses Release of an N-terminal amino acid, Xaa-|-Yaa-, in which Xaa is preferably Leu, but may be other amino acids including Pro although not Arg or Lys, and Yaa may be Pro. Amino acid amides and methyl esters are also readily hydrolyzed, but rates on arylamides are exceedingly low.. It catalyses the reaction Release of an N-terminal amino acid, preferentially leucine, but not glutamic or aspartic acids.. Its function is as follows. Presumably involved in the processing and regular turnover of intracellular proteins. Catalyzes the removal of unsubstituted N-terminal amino acids from various peptides. This chain is Probable cytosol aminopeptidase, found in Pseudomonas aeruginosa (strain UCBPP-PA14).